Reading from the N-terminus, the 352-residue chain is Biotin synthase (352 aa).

In terms of domain architecture, Radical SAM core spans 44-262 (NRVQVSTLLS…LAVARILMPQ (219 aa)). Cys-59, Cys-63, and Cys-66 together coordinate [4Fe-4S] cluster. [2Fe-2S] cluster contacts are provided by Cys-103, Cys-134, Cys-194, and Arg-266.

This sequence belongs to the radical SAM superfamily. Biotin synthase family. In terms of assembly, homodimer. It depends on [4Fe-4S] cluster as a cofactor. The cofactor is [2Fe-2S] cluster.

It catalyses the reaction (4R,5S)-dethiobiotin + (sulfur carrier)-SH + 2 reduced [2Fe-2S]-[ferredoxin] + 2 S-adenosyl-L-methionine = (sulfur carrier)-H + biotin + 2 5'-deoxyadenosine + 2 L-methionine + 2 oxidized [2Fe-2S]-[ferredoxin]. The protein operates within cofactor biosynthesis; biotin biosynthesis; biotin from 7,8-diaminononanoate: step 2/2. Catalyzes the conversion of dethiobiotin (DTB) to biotin by the insertion of a sulfur atom into dethiobiotin via a radical-based mechanism. The polypeptide is Biotin synthase (Pseudomonas savastanoi pv. phaseolicola (strain 1448A / Race 6) (Pseudomonas syringae pv. phaseolicola (strain 1448A / Race 6))).